Here is a 171-residue protein sequence, read N- to C-terminus: Disulfide bond formation protein B (171 aa).

Residues 1–8 (MQWSYRFV) are Cytoplasmic-facing. A helical transmembrane segment spans residues 9 to 25 (SGLLVLASIVGMTFALY). At 26-43 (LEHFKGLEPCPLCIFQRV) the chain is on the periplasmic side. C35 and C38 are disulfide-bonded. A helical transmembrane segment spans residues 44 to 60 (GLMAMGIVALIAFLHNP). Over 61 to 67 (VSNAFKR) the chain is Cytoplasmic. A helical transmembrane segment spans residues 68 to 85 (VYAFLATLGILWSVGVAI). The Periplasmic portion of the chain corresponds to 86 to 142 (RHVWLQTLPPDQVPSCGPGLNYLLDALPLKTVLQQVLQGSGECAAIHWTFLGQSLPV). A disulfide bridge connects residues C101 and C128. A helical membrane pass occupies residues 143–161 (WSLAYFSLILLVCVWQLLR). Residues 162–171 (RYPVIVTKKK) are Cytoplasmic-facing.

It belongs to the DsbB family.

It is found in the cell inner membrane. Functionally, required for disulfide bond formation in some periplasmic proteins. Acts by oxidizing the DsbA protein. The protein is Disulfide bond formation protein B of Acinetobacter baylyi (strain ATCC 33305 / BD413 / ADP1).